Reading from the N-terminus, the 371-residue chain is N-acetyldiaminopimelate deacetylase (371 aa).

Residue D68 is part of the active site. Residue E127 is the Proton acceptor of the active site.

The protein belongs to the peptidase M20A family. N-acetyldiaminopimelate deacetylase subfamily.

It carries out the reaction N-acetyl-(2S,6S)-2,6-diaminopimelate + H2O = (2S,6S)-2,6-diaminopimelate + acetate. Its pathway is amino-acid biosynthesis; L-lysine biosynthesis via DAP pathway; LL-2,6-diaminopimelate from (S)-tetrahydrodipicolinate (acetylase route): step 3/3. Its function is as follows. Catalyzes the conversion of N-acetyl-diaminopimelate to diaminopimelate and acetate. The sequence is that of N-acetyldiaminopimelate deacetylase from Listeria innocua serovar 6a (strain ATCC BAA-680 / CLIP 11262).